Here is a 496-residue protein sequence, read N- to C-terminus: Neuronal acetylcholine receptor subunit beta-4 (496 aa).

Positions 1 to 19 are cleaved as a signal peptide; it reads MRSALPLVLFSLVALCGRG. At 20 to 236 the chain is on the extracellular side; it reads DCRVANAEEK…IIKRKPLFYT (217 aa). Asn-36, Asn-93, Asn-138, and Asn-166 each carry an N-linked (GlcNAc...) asparagine glycan. Cys-153 and Cys-167 form a disulfide bridge. Residues 237 to 257 form a helical membrane-spanning segment; the sequence is INLIIPCVLITSLAILVFYLP. The Cytoplasmic portion of the chain corresponds to 258-265; that stretch reads SDCGEKMT. Glu-262 is a Na(+) binding site. The helical transmembrane segment at 266 to 286 threads the bilayer; it reads LCISVLLALTVFLLLISKIVP. The Extracellular segment spans residues 287–298; sequence PTSLNVPLIGKY. The helical transmembrane segment at 299-319 threads the bilayer; it reads LMFTMVLVTFSIVTSVCVLNV. Over 320–464 the chain is Cytoplasmic; that stretch reads HHRSPSTHTM…WKYVAMVVDR (145 aa). The helical transmembrane segment at 465–485 threads the bilayer; the sequence is LFLWVFVVVCVLGTVGLFLPP. The Extracellular portion of the chain corresponds to 486 to 496; the sequence is LFQTHTPSEEP.

It belongs to the ligand-gated ion channel (TC 1.A.9) family. Acetylcholine receptor (TC 1.A.9.1) subfamily. Beta-4/CHRNB4 sub-subfamily. In terms of assembly, neuronal AChR is composed of two different types of subunits: alpha and beta. CHRNB4/Beta-4 subunit can be combined to CHRNA2/alpha-2, CHRNA3/alpha-3 or CHRNA4/alpha-4, CHRNA5/alpha-5 and CHRNB3/beta-3 to give rise to functional receptors. Forms stoichiometries such as (CHRNA3)2:(CHRNB4)3 or (CHRNA3:CHRNB4)2:CHRNB3. Interacts with RIC3; which is required for proper folding and assembly. Interacts with LYPD6.

The protein localises to the synaptic cell membrane. Its subcellular location is the cell membrane. The catalysed reaction is Ca(2+)(in) = Ca(2+)(out). It carries out the reaction K(+)(in) = K(+)(out). The enzyme catalyses Na(+)(in) = Na(+)(out). Component of neuronal acetylcholine receptors (nAChRs) that function as pentameric, ligand-gated cation channels with high calcium permeability among other activities. nAChRs are excitatory neurotrasnmitter receptors formed by a collection of nAChR subunits known to mediate synaptic transmission in the nervous system and the neuromuscular junction. Each nAchR subunit confers differential attributes to channel properties, including activation, deactivation and desensitization kinetics, pH sensitivity, cation permeability, and binding to allosteric modulators. CHRNB4 forms heteropentameric neuronal acetylcholine receptors with CHRNA2, CHRNA3 and CHRNA4, as well as CHRNA5 and CHRNB3 as accesory subunits. CHRNA3:CHRNB4 being predominant in neurons of the autonomic ganglia, it is known as ganglionic nicotinic receptor. CHRNA3:CHRNB4 or CHRNA3:CHRNA5:CHRNB4 play also an important role in the habenulo-interpeduncular tract, modulating the mesolimbic dopamine system and affecting reward circuits and addiction. Hypothalamic CHRNA3:CHRNB4 nAChR activation by nicotine leads to activation of POMC neurons and a decrease in food intake. This is Neuronal acetylcholine receptor subunit beta-4 (CHRNB4) from Bos taurus (Bovine).